Consider the following 119-residue polypeptide: Small ribosomal subunit protein bS16 (119 aa).

Basic residues predominate over residues 96–107 (RKKRRAYRQRRS). The tract at residues 96–119 (RKKRRAYRQRRSTQREEAAKDATK) is disordered. Positions 108-119 (TQREEAAKDATK) are enriched in basic and acidic residues.

The protein belongs to the bacterial ribosomal protein bS16 family.

The protein is Small ribosomal subunit protein bS16 of Chlamydia pneumoniae (Chlamydophila pneumoniae).